A 147-amino-acid chain; its full sequence is Large ribosomal subunit protein uL15 (147 aa).

The disordered stretch occupies residues 1–58 (MRLHDLKPAEGSTKKKKRVGRGIGSGHGKTSGRGHKGQNARSGGGVRPGFEGGQMPLT). Residues 42–52 (SGGGVRPGFEG) are compositionally biased toward gly residues.

Belongs to the universal ribosomal protein uL15 family. As to quaternary structure, part of the 50S ribosomal subunit.

In terms of biological role, binds to the 23S rRNA. The protein is Large ribosomal subunit protein uL15 of Caldanaerobacter subterraneus subsp. tengcongensis (strain DSM 15242 / JCM 11007 / NBRC 100824 / MB4) (Thermoanaerobacter tengcongensis).